The following is a 408-amino-acid chain: LL-diaminopimelate aminotransferase (408 aa).

The substrate site is built by Tyr-15 and Gly-42. Pyridoxal 5'-phosphate contacts are provided by residues Tyr-72, 108–109 (SK), Tyr-132, Asn-187, Tyr-218, and 246–248 (SFS). Positions 109, 132, and 187 each coordinate substrate. An N6-(pyridoxal phosphate)lysine modification is found at Lys-249. 2 residues coordinate pyridoxal 5'-phosphate: Arg-257 and Asn-292. Asn-292 and Arg-388 together coordinate substrate.

The protein belongs to the class-I pyridoxal-phosphate-dependent aminotransferase family. LL-diaminopimelate aminotransferase subfamily. As to quaternary structure, homodimer. Requires pyridoxal 5'-phosphate as cofactor.

It catalyses the reaction (2S,6S)-2,6-diaminopimelate + 2-oxoglutarate = (S)-2,3,4,5-tetrahydrodipicolinate + L-glutamate + H2O + H(+). The protein operates within amino-acid biosynthesis; L-lysine biosynthesis via DAP pathway; LL-2,6-diaminopimelate from (S)-tetrahydrodipicolinate (aminotransferase route): step 1/1. Functionally, involved in the synthesis of meso-diaminopimelate (m-DAP or DL-DAP), required for both lysine and peptidoglycan biosynthesis. Catalyzes the direct conversion of tetrahydrodipicolinate to LL-diaminopimelate. The protein is LL-diaminopimelate aminotransferase of Synechococcus sp. (strain CC9902).